The primary structure comprises 591 residues: V-type ATP synthase alpha chain (591 aa).

Residue 233–240 (GPFGAGKT) participates in ATP binding.

The protein belongs to the ATPase alpha/beta chains family.

It carries out the reaction ATP + H2O + 4 H(+)(in) = ADP + phosphate + 5 H(+)(out). Its function is as follows. Produces ATP from ADP in the presence of a proton gradient across the membrane. The V-type alpha chain is a catalytic subunit. This Streptococcus pyogenes serotype M1 protein is V-type ATP synthase alpha chain.